The following is a 152-amino-acid chain: uncharacterized protein (152 aa).

This is an uncharacterized protein from Acheta domesticus (House cricket).